Consider the following 157-residue polypeptide: Cyclic pyranopterin monophosphate synthase (157 aa).

Substrate contacts are provided by residues 74-76 (MCH) and 112-113 (ME). Asp127 is an active-site residue.

Belongs to the MoaC family. In terms of assembly, homohexamer; trimer of dimers.

The catalysed reaction is (8S)-3',8-cyclo-7,8-dihydroguanosine 5'-triphosphate = cyclic pyranopterin phosphate + diphosphate. Its pathway is cofactor biosynthesis; molybdopterin biosynthesis. Catalyzes the conversion of (8S)-3',8-cyclo-7,8-dihydroguanosine 5'-triphosphate to cyclic pyranopterin monophosphate (cPMP). This chain is Cyclic pyranopterin monophosphate synthase, found in Campylobacter jejuni subsp. jejuni serotype O:6 (strain 81116 / NCTC 11828).